A 566-amino-acid polypeptide reads, in one-letter code: Protein pacG (566 aa).

The NDT80 DNA-binding region spans 79–326; that stretch reads TSFDPPPPAE…RSPRNFQSRK (248 aa). 2 disordered regions span residues 314–422 and 448–470; these read VRGR…EAHR and DSRP…DSGR. The segment covering 333 to 349 has biased composition (low complexity); that stretch reads SAAASRKNAQAAAASNN. 3 stretches are compositionally biased toward polar residues: residues 365-391, 403-413, and 452-466; these read VKSS…ATNS, HSSVYSQSSPE, and HTSF…SLSV.

It is found in the nucleus. It localises to the cytoplasm. Its function is as follows. Transcription factor that acts as a positive regulator of nonrepressible acid phosphatase activity. Is a major regulator of responses to nitrogen and carbon starvation and is essential for the expression of genes involved in vegetative incompatibility (like pin-c, het-6, and tol). Vegetative incompatibility is a non-self-recognition system ubiquitous in filamentous fungi which results in programmed cell death. The chain is Protein pacG (pacG) from Emericella nidulans (strain FGSC A4 / ATCC 38163 / CBS 112.46 / NRRL 194 / M139) (Aspergillus nidulans).